Here is a 722-residue protein sequence, read N- to C-terminus: Pesticidal crystal protein Cry22Aa (722 aa).

Its function is as follows. Promotes colloidosmotic lysis by binding to the midgut epithelial cells of hymenopteran species. The chain is Pesticidal crystal protein Cry22Aa (cry22Aa) from Bacillus thuringiensis.